We begin with the raw amino-acid sequence, 651 residues long: Ion-translocating oxidoreductase complex subunit C (651 aa).

4Fe-4S ferredoxin-type domains are found at residues 368-398 (EYAE…QQLY) and 408-437 (KSEE…IQYF). Positions 378, 381, 384, 388, 417, 420, 423, and 427 each coordinate [4Fe-4S] cluster. Composition is skewed to basic and acidic residues over residues 465–477 (QARM…ERKA) and 485–513 (ARRE…KANE). Disordered stretches follow at residues 465–565 (QARM…QPTD) and 583–624 (LAQA…DPKK). Composition is skewed to polar residues over residues 554-564 (VENQEQQTQPT) and 587-600 (NSTS…QTAE). A compositionally biased stretch (basic and acidic residues) spans 602-614 (EVEKTKSAVEKTQ).

This sequence belongs to the 4Fe4S bacterial-type ferredoxin family. RnfC subfamily. As to quaternary structure, the complex is composed of six subunits: RnfA, RnfB, RnfC, RnfD, RnfE and RnfG. The cofactor is [4Fe-4S] cluster.

Its subcellular location is the cell inner membrane. Part of a membrane-bound complex that couples electron transfer with translocation of ions across the membrane. This chain is Ion-translocating oxidoreductase complex subunit C, found in Haemophilus influenzae (strain PittEE).